A 664-amino-acid polypeptide reads, in one-letter code: MAESRKRFLGRAARNPLPVTRDLQLPPTRRDQPAFREQRKQKLKEYLLIRKTVFPYKQENQISRDQKMITSEDRVQEGKKVVKLKTEVADKENIESTVEKNCIPLKAGEVTSSEIHNSKDNVQAVQLLSTRDDLPGQTVTLDPACHHKDNKKMQMTAEKPKQDSNVSKKRVLGYYHGQIVQSKINSFRKLPSVKGESLTTTKKLPTTVSKAMKAQSEPANTVSVKASTTAAATKFADAKPVSTASKDTLVRPPIRSLHSSSHGAAKQGLSRPLANVTVRKGMLDKESHRSEPVVSVVKAGSSQAPSRSIASKDAARTDSSNTRLMVKPKDTDQRRYTIAGASVHRSAQLKDTTAERKAQMTEWRTGKGKGLKRPPHSVVTQAEPKGQSENPVGSFWTTMAEEDEQRLFTEKVNKTISECLNLINEGCPKEEILATLNDLIHNIPDAKKLVKYWICLVRIEPITSPIENIISIYEKAILAGAQPIEEMRHIIIDILTTKSQEKVNLGENIEEAHATKEPIQEVNADANVGSGKPGEENEHHGKVEVYEDDQDNKIKDPDLTTPDSKTEAGCIIRYNVSSTPRLQSMKKMQHDKNSTLKELKFLTPVRRSRRIQDKTSRLPAMLKDHDPSVSSLEQLSELGGDAFVCRPNAALCPLFFETDVAEEE.

A disordered region spans residues 1–38; sequence MAESRKRFLGRAARNPLPVTRDLQLPPTRRDQPAFREQ. Basic and acidic residues predominate over residues 28–38; it reads TRRDQPAFREQ. The interval 160 to 319 is association with alpha- and beta-tubulin; sequence PKQDSNVSKK…ASKDAARTDS (160 aa). S186 is subject to Phosphoserine. Disordered regions lie at residues 254–273, 283–328, 366–393, and 512–545; these read IRSL…SRPL, LDKE…MVKP, GKGK…NPVG, and AHAT…KVEV. A compositionally biased stretch (polar residues) spans 300–309; the sequence is GSSQAPSRSI. Residues 366 to 375 show a composition bias toward basic residues; that stretch reads GKGKGLKRPP. Positions 533 to 545 are enriched in basic and acidic residues; that stretch reads PGEENEHHGKVEV. Position 561 is a phosphothreonine (T561). The residue at position 577 (S577) is a Phosphoserine. T579 bears the Phosphothreonine mark. S584 is subject to Phosphoserine.

Belongs to the CKAP2 family. Associates with alpha- and beta-tubulins.

The protein localises to the cytoplasm. It localises to the cytoskeleton. Its subcellular location is the spindle. It is found in the spindle pole. Functionally, possesses microtubule stabilizing properties. Involved in regulating aneuploidy, cell cycling, and cell death in a p53-dependent manner. The polypeptide is Cytoskeleton-associated protein 2 (Mus musculus (Mouse)).